The primary structure comprises 90 residues: Large ribosomal subunit protein bL31B (90 aa).

It belongs to the bacterial ribosomal protein bL31 family. Type B subfamily. Part of the 50S ribosomal subunit.

The sequence is that of Large ribosomal subunit protein bL31B from Pseudomonas fluorescens (strain SBW25).